The following is a 175-amino-acid chain: Adenylyl-sulfate kinase (175 aa).

Gly12–Thr19 provides a ligand contact to ATP. Ser86 serves as the catalytic Phosphoserine intermediate.

The protein belongs to the APS kinase family.

It carries out the reaction adenosine 5'-phosphosulfate + ATP = 3'-phosphoadenylyl sulfate + ADP + H(+). The protein operates within sulfur metabolism; hydrogen sulfide biosynthesis; sulfite from sulfate: step 2/3. In terms of biological role, catalyzes the synthesis of activated sulfate. In Synechococcus sp. (strain JA-2-3B'a(2-13)) (Cyanobacteria bacterium Yellowstone B-Prime), this protein is Adenylyl-sulfate kinase.